A 504-amino-acid polypeptide reads, in one-letter code: ATP synthase subunit alpha 1 (504 aa).

170–177 is a binding site for ATP; that stretch reads GDRQIGKT.

Belongs to the ATPase alpha/beta chains family. F-type ATPases have 2 components, CF(1) - the catalytic core - and CF(0) - the membrane proton channel. CF(1) has five subunits: alpha(3), beta(3), gamma(1), delta(1), epsilon(1). CF(0) has three main subunits: a(1), b(2) and c(9-12). The alpha and beta chains form an alternating ring which encloses part of the gamma chain. CF(1) is attached to CF(0) by a central stalk formed by the gamma and epsilon chains, while a peripheral stalk is formed by the delta and b chains.

The protein localises to the cell inner membrane. The enzyme catalyses ATP + H2O + 4 H(+)(in) = ADP + phosphate + 5 H(+)(out). In terms of biological role, produces ATP from ADP in the presence of a proton gradient across the membrane. The alpha chain is a regulatory subunit. This chain is ATP synthase subunit alpha 1, found in Syntrophus aciditrophicus (strain SB).